Here is a 191-residue protein sequence, read N- to C-terminus: Peptidyl-tRNA hydrolase (191 aa).

Tyr17 serves as a coordination point for tRNA. Residue His22 is the Proton acceptor of the active site. Residues Tyr68, Asn70, and Asn116 each coordinate tRNA.

Belongs to the PTH family. Monomer.

Its subcellular location is the cytoplasm. It carries out the reaction an N-acyl-L-alpha-aminoacyl-tRNA + H2O = an N-acyl-L-amino acid + a tRNA + H(+). In terms of biological role, hydrolyzes ribosome-free peptidyl-tRNAs (with 1 or more amino acids incorporated), which drop off the ribosome during protein synthesis, or as a result of ribosome stalling. Its function is as follows. Catalyzes the release of premature peptidyl moieties from peptidyl-tRNA molecules trapped in stalled 50S ribosomal subunits, and thus maintains levels of free tRNAs and 50S ribosomes. The polypeptide is Peptidyl-tRNA hydrolase (Mycobacterium avium (strain 104)).